Consider the following 283-residue polypeptide: MDLLGAHVSIAGGIHNAVDRGVSSGCDVIQIFTQNSNQWKGKAVSPADAQLFRDKLAASGLSHVMSHDIYLINLAAAPGEVKDKSLIAFKEEMQRCAALGIGKIVMHPGSHTGDGEDTGIRRICEAFDQLFGEVPQFTGKVLLENTAGQGTNLGYRFDHLKAIIEGSSYPTRFGVCFDTCHAFASGYPIADRDGYRRTFDEFDRALGIDKLMAFHLNDSKKGLGCKVDRHEHIGAGALGLEPFRFILNDPHFKLVPKFIETPKGDADEMDALNLKLLRSLIEG.

Residues His67, His107, Glu144, Asp178, His181, His215, Asp228, His230, and Glu260 each contribute to the Zn(2+) site.

Belongs to the AP endonuclease 2 family. Zn(2+) is required as a cofactor.

The enzyme catalyses Endonucleolytic cleavage to 5'-phosphooligonucleotide end-products.. Its function is as follows. Endonuclease IV plays a role in DNA repair. It cleaves phosphodiester bonds at apurinic or apyrimidinic (AP) sites, generating a 3'-hydroxyl group and a 5'-terminal sugar phosphate. This Geobacter sp. (strain M21) protein is Probable endonuclease 4.